The sequence spans 241 residues: DNA repair protein RecO (241 aa).

This sequence belongs to the RecO family.

Involved in DNA repair and RecF pathway recombination. The chain is DNA repair protein RecO from Xanthomonas campestris pv. campestris (strain B100).